The primary structure comprises 535 residues: GMP synthase [glutamine-hydrolyzing] (535 aa).

Positions 4-210 (KILILDFGSQ…VHEICKCKPD (207 aa)) constitute a Glutamine amidotransferase type-1 domain. Cys-85 functions as the Nucleophile in the catalytic mechanism. Residues His-184 and Glu-186 contribute to the active site. The GMPS ATP-PPase domain maps to 211–403 (WVMGDYIAEA…LGLPREMVYR (193 aa)). Residue 238-244 (SGGVDSS) participates in ATP binding.

As to quaternary structure, homodimer.

The enzyme catalyses XMP + L-glutamine + ATP + H2O = GMP + L-glutamate + AMP + diphosphate + 2 H(+). It participates in purine metabolism; GMP biosynthesis; GMP from XMP (L-Gln route): step 1/1. Functionally, catalyzes the synthesis of GMP from XMP. The polypeptide is GMP synthase [glutamine-hydrolyzing] (Polynucleobacter necessarius subsp. necessarius (strain STIR1)).